The primary structure comprises 184 residues: Shikimate kinase (184 aa).

Residue 17 to 22 (GAGKTT) participates in ATP binding. Thr21 is a Mg(2+) binding site. 3 residues coordinate substrate: Asp39, Arg63, and Gly85. Arg123 serves as a coordination point for ATP. Arg142 contacts substrate.

It belongs to the shikimate kinase family. Monomer. Mg(2+) serves as cofactor.

Its subcellular location is the cytoplasm. It catalyses the reaction shikimate + ATP = 3-phosphoshikimate + ADP + H(+). It participates in metabolic intermediate biosynthesis; chorismate biosynthesis; chorismate from D-erythrose 4-phosphate and phosphoenolpyruvate: step 5/7. Catalyzes the specific phosphorylation of the 3-hydroxyl group of shikimic acid using ATP as a cosubstrate. The polypeptide is Shikimate kinase (Burkholderia pseudomallei (strain 1710b)).